A 498-amino-acid chain; its full sequence is Cytochrome P450 monooxygenase apdB (498 aa).

The helical transmembrane segment at 20–40 threads the bilayer; sequence ASPQVFKLFVLILFVLLVLKI. Cys-457 is a heme binding site.

Belongs to the cytochrome P450 family. Heme is required as a cofactor.

The protein localises to the membrane. Its pathway is secondary metabolite biosynthesis. Its function is as follows. Cytochrome P450 monooxygenase; part of the gene cluster that mediates the biosynthesis of aspyridones. The polyketide-amino acid backbone preaspyridone A is first assembled by the PKS-NRPS hybrid apdA. The assembly of preaspyridone A is initiated by loading of malonyl-CoA onto apdA, followed by decarboxylation to yield the acetyl starter unit. The growing polyketide chain then elongates into a tetraketide. The adpA PKS module catalyzes three Claisen condensations, as well as beta-keto processing and methylation. Alpha-methylation step during polyketide synthesis is a prerequisite and a key checkpoint for chain transfer between PKS and NRPS modules. The downstream NRPS module contains the condensation (C), adenylation (A), and thiolation (T) domains and catalyzes the incorporation of tyrosine via the formation of the L-tyrosinyl-thioester and the amide linkage between L-tyrosinyl-thioester and the tetraketide. The bimodular assembly line is terminated with a reductase (R) domain that facilitates formation and release of the tetramic acid product. Because apdA lacks a designated enoylreductase (ER) domain, the required activity is provided the enoyl reductase apdC. ApdC appears to operate with different stereoselectivity in different PKS cycle. Combined with apdC, apdA is proposed to synthesize preaspyridone A via about 20 enzymatic steps. A number of oxidative steps performed successively by the cytochrome P450 monooxygenases apdE and apdB are required for the conversion of preaspyridone A to aspyridone A. The cytochrome P450 monooxygenase apdE is responsible for the oxidative dephenylation of preaspyridone A. Finally, the predicted FAD-dependent monooxygenase apdD and the acyl-CoA dehydrogenase apdG may be involved in the transformation of aspyridone A into aspyridone B. This is Cytochrome P450 monooxygenase apdB from Emericella nidulans (strain FGSC A4 / ATCC 38163 / CBS 112.46 / NRRL 194 / M139) (Aspergillus nidulans).